A 225-amino-acid chain; its full sequence is ATP-dependent dethiobiotin synthetase BioD (225 aa).

Position 13–18 (13–18 (NVGKTL)) interacts with ATP. Residue Thr-17 participates in Mg(2+) binding. Lys-38 is a catalytic residue. Thr-42 serves as a coordination point for substrate. ATP-binding positions include Asp-55, 116 to 119 (EGAG), 176 to 177 (NH), and 205 to 207 (PWL). Residues Asp-55 and Glu-116 each contribute to the Mg(2+) site.

Belongs to the dethiobiotin synthetase family. As to quaternary structure, homodimer. It depends on Mg(2+) as a cofactor.

Its subcellular location is the cytoplasm. The enzyme catalyses (7R,8S)-7,8-diammoniononanoate + CO2 + ATP = (4R,5S)-dethiobiotin + ADP + phosphate + 3 H(+). It functions in the pathway cofactor biosynthesis; biotin biosynthesis; biotin from 7,8-diaminononanoate: step 1/2. Catalyzes a mechanistically unusual reaction, the ATP-dependent insertion of CO2 between the N7 and N8 nitrogen atoms of 7,8-diaminopelargonic acid (DAPA, also called 7,8-diammoniononanoate) to form a ureido ring. The sequence is that of ATP-dependent dethiobiotin synthetase BioD from Baumannia cicadellinicola subsp. Homalodisca coagulata.